A 640-amino-acid polypeptide reads, in one-letter code: tRNA-dihydrouridine(47) synthase [NAD(P)(+)]-like (640 aa).

Residues 1–11 (MAESEGSNTEN) are compositionally biased toward polar residues. 2 disordered regions span residues 1–23 (MAESEGSNTENGKVGAVKSENLD) and 43–123 (FIDA…HSQF). The segment covering 43 to 57 (FIDADGKDVTEKETC) has biased composition (basic and acidic residues). The segment covering 58-72 (SELSLNDAENTTRTE) has biased composition (polar residues). Over residues 77–86 (PEAKRIKLDD) the composition is skewed to basic and acidic residues. The segment covering 104 to 120 (EKKRARGQNKSRPHMKH) has biased composition (basic residues). C3H1-type zinc fingers lie at residues 123–153 (FEENKLCPSVTQECASKCFFGDKCKFSHDVA) and 161–191 (EDIRPNCHLYETFGKCIYGVTCRFAKSHLGE). FMN contacts are provided by residues 301-303 (PLT) and Gln355. The Proton donor role is filled by Cys386. FMN contacts are provided by residues Lys425, His455, 487–489 (NGD), and 510–511 (AR).

This sequence belongs to the Dus family. Dus3 subfamily. FMN is required as a cofactor.

It catalyses the reaction 5,6-dihydrouridine(47) in tRNA + NAD(+) = uridine(47) in tRNA + NADH + H(+). The catalysed reaction is 5,6-dihydrouridine(47) in tRNA + NADP(+) = uridine(47) in tRNA + NADPH + H(+). It carries out the reaction a 5,6-dihydrouridine in mRNA + NAD(+) = a uridine in mRNA + NADH + H(+). The enzyme catalyses a 5,6-dihydrouridine in mRNA + NADP(+) = a uridine in mRNA + NADPH + H(+). Functionally, catalyzes the synthesis of dihydrouridine, a modified base, in various RNAs, such as tRNAs, mRNAs and some long non-coding RNAs (lncRNAs). Mainly modifies the uridine in position 47 (U47) in the D-loop of most cytoplasmic tRNAs. Also able to mediate the formation of dihydrouridine in some mRNAs, thereby regulating their translation. The protein is tRNA-dihydrouridine(47) synthase [NAD(P)(+)]-like (dus3l) of Xenopus laevis (African clawed frog).